Reading from the N-terminus, the 244-residue chain is 3-oxoacyl-[acyl-carrier-protein] reductase FabG (244 aa).

Residues 12–15 (GASR), Thr-37, 59–60 (NV), and Asn-86 contribute to the NADP(+) site. Ser-138 provides a ligand contact to substrate. The active-site Proton acceptor is Tyr-151. NADP(+)-binding positions include 151–155 (YAAAK) and Ile-184.

This sequence belongs to the short-chain dehydrogenases/reductases (SDR) family. Homotetramer.

The catalysed reaction is a (3R)-hydroxyacyl-[ACP] + NADP(+) = a 3-oxoacyl-[ACP] + NADPH + H(+). Its pathway is lipid metabolism; fatty acid biosynthesis. In terms of biological role, catalyzes the NADPH-dependent reduction of beta-ketoacyl-ACP substrates to beta-hydroxyacyl-ACP products, the first reductive step in the elongation cycle of fatty acid biosynthesis. This is 3-oxoacyl-[acyl-carrier-protein] reductase FabG (fabG) from Vibrio cholerae serotype O1 (strain ATCC 39315 / El Tor Inaba N16961).